A 1232-amino-acid chain; its full sequence is Histone-lysine N-methyltransferase MECOM (1232 aa).

Residues 22-68 (PEIPLEEMPDADADGITSVPSLHIQEPCSPATSSESFTPKEGSPYKA) are disordered. The segment covering 25-34 (PLEEMPDADA) has biased composition (acidic residues). Positions 80–192 (DEFELRESTM…PGEELLLFMK (113 aa)) constitute an SET domain. Glycyl lysine isopeptide (Lys-Gly) (interchain with G-Cter in SUMO2) cross-links involve residues Lys-101 and Lys-192. An interaction with SUV39H1 and probably MAPK9 and SMAD3 region spans residues 191–442 (MKSEEDPHEP…NHFAAGGFFG (252 aa)). C2H2-type zinc fingers lie at residues 211 to 238 (HRCE…STPH), 265 to 287 (QDCK…MLSH), 293 to 315 (YKCD…QMSH), 321 to 344 (YECE…RSQH), and 350 to 372 (HACP…KHIH). Lys-294 participates in a covalent cross-link: Glycyl lysine isopeptide (Lys-Gly) (interchain with G-Cter in SUMO2). Residues Lys-369 and Lys-376 each participate in a glycyl lysine isopeptide (Lys-Gly) (interchain with G-Cter in SUMO2) cross-link. The C2H2-type 6 zinc-finger motif lies at 378–400 (FICEVCHKSYTQFSNLCRHKRMH). The segment at 407–429 (IKCKDCGQMFSTTSSLNKHRRFC) adopts a C2H2-type 7; atypical zinc-finger fold. Glycyl lysine isopeptide (Lys-Gly) (interchain with G-Cter in SUMO2) cross-links involve residues Lys-432, Lys-525, Lys-545, Lys-549, and Lys-557. The interval 548-622 (SKHPPVGDNK…KCKENGKMFK (75 aa)) is disordered. The span at 562 to 577 (LPERSSEERPLEKISD) shows a compositional bias: basic and acidic residues. The span at 588–600 (STPSGSDLETTSG) shows a compositional bias: polar residues. The segment covering 608–622 (ESDKEKCKENGKMFK) has biased composition (basic and acidic residues). A Nuclear localization signal motif is present at residues 611–624 (KEKCKENGKMFKDK). Lys-624 participates in a covalent cross-link: Glycyl lysine isopeptide (Lys-Gly) (interchain with G-Cter in SUMO2). Ser-626 carries the post-translational modification Phosphoserine. Residues Lys-637, Lys-665, Lys-687, and Lys-723 each participate in a glycyl lysine isopeptide (Lys-Gly) (interchain with G-Cter in SUMO2) cross-link. A disordered region spans residues 720–823 (LPLKMEPQSP…DGSLQHARPT (104 aa)). Ser-728 carries the post-translational modification Phosphoserine. Residues Lys-733, Lys-734, and Lys-737 each participate in a glycyl lysine isopeptide (Lys-Gly) (interchain with G-Cter in SUMO2) cross-link. Phosphoserine is present on Ser-742. Residues 743 to 747 (PFDLT) carry the CTBP-binding motif 1 motif. Residues Lys-751, Lys-754, and Lys-762 each participate in a glycyl lysine isopeptide (Lys-Gly) (interchain with G-Cter in SUMO2) cross-link. A compositionally biased stretch (polar residues) spans 758 to 773 (SGPSKPSGTPATSQDQ). Positions 774–778 (PLDLS) match the CTBP-binding motif 2 motif. Residues Lys-789, Lys-802, and Lys-803 each participate in a glycyl lysine isopeptide (Lys-Gly) (interchain with G-Cter in SUMO2) cross-link. A compositionally biased stretch (basic and acidic residues) spans 791 to 805 (TEPRKNHVFGEKKGS). Residues 806–816 (NMDTRPSSDGS) show a composition bias toward polar residues. Residues Lys-837, Lys-846, Lys-848, and Lys-879 each participate in a glycyl lysine isopeptide (Lys-Gly) (interchain with G-Cter in SUMO2) cross-link. C2H2-type zinc fingers lie at residues 914-936 (YTCR…LRTH), 942-965 (YRCK…RNIH), and 971-993 (FKCH…LKKH). Lys-1020 participates in a covalent cross-link: Glycyl lysine isopeptide (Lys-Gly) (interchain with G-Cter in SUMO2). The segment covering 1032-1043 (IGNSNHGSQSPR) has biased composition (polar residues). The tract at residues 1032 to 1107 (IGNSNHGSQS…GVTRLDEEIP (76 aa)) is disordered. A phosphoserine mark is found at Ser-1039 and Ser-1041. Positions 1044–1059 (NMEERMNGSHFKDKKA) are enriched in basic and acidic residues. Residues Lys-1055 and Lys-1058 each participate in a glycyl lysine isopeptide (Lys-Gly) (interchain with G-Cter in SUMO2) cross-link. A compositionally biased stretch (acidic residues) spans 1068 to 1088 (LLDDEEVEDEVLLDEEDEDND). Residues 1089 to 1104 (IPGKPRKELGVTRLDE) are compositionally biased toward basic and acidic residues. Glycyl lysine isopeptide (Lys-Gly) (interchain with G-Cter in SUMO2) cross-links involve residues Lys-1122, Lys-1129, Lys-1134, Lys-1151, Lys-1178, and Lys-1186.

In terms of assembly, homooligomer. Interacts with CTBP1. Interacts with SMAD3 (via MH2 domain); the interaction is direct. Interacts with SMAD4; through interaction with SMAD3. Interacts with CREBBP, KAT2B and histone deacetylases. Interacts with MAPK8 and MAPK9; inhibits JNK signaling. Interacts with SUV39H1 (via SET domain); enhances MECOM transcriptional repression activity. Post-translationally, may be acetylated by CREBBP and KAT2B.

The protein localises to the nucleus. It is found in the nucleus speckle. Its subcellular location is the cytoplasm. The enzyme catalyses L-lysyl(9)-[histone H3] + S-adenosyl-L-methionine = N(6)-methyl-L-lysyl(9)-[histone H3] + S-adenosyl-L-homocysteine + H(+). Functions as a transcriptional regulator binding to DNA sequences in the promoter region of target genes and regulating positively or negatively their expression. Oncogene which plays a role in development, cell proliferation and differentiation. May also play a role in apoptosis through regulation of the JNK and TGF-beta signaling. Involved in hematopoiesis. Functionally, displays histone methyltransferase activity and monomethylates 'Lys-9' of histone H3 (H3K9me1) in vitro. Probably catalyzes the monomethylation of free histone H3 in the cytoplasm which is then transported to the nucleus and incorporated into nucleosomes where SUV39H methyltransferases use it as a substrate to catalyze histone H3 'Lys-9' trimethylation. Likely to be one of the primary histone methyltransferases along with PRDM16 that direct cytoplasmic H3K9me1 methylation. The protein is Histone-lysine N-methyltransferase MECOM of Mus musculus (Mouse).